The chain runs to 143 residues: Probable glycine cleavage system H protein (143 aa).

The region spanning 36–118 is the Lipoyl-binding domain; it reads VATVGITDFA…YGEGWIFKIK (83 aa). An N6-lipoyllysine modification is found at Lys-77.

This sequence belongs to the GcvH family. The glycine cleavage system is composed of four proteins: P, T, L and H. The cofactor is (R)-lipoate.

Functionally, the glycine cleavage system catalyzes the degradation of glycine. The H protein shuttles the methylamine group of glycine from the P protein to the T protein. The protein is Probable glycine cleavage system H protein of Aeropyrum pernix (strain ATCC 700893 / DSM 11879 / JCM 9820 / NBRC 100138 / K1).